The chain runs to 637 residues: Probable potassium transport system protein Kup 2 (637 aa).

The next 12 membrane-spanning stretches (helical) occupy residues 18–38 (FLVLLLGSIGVVYGDIGTSPL), 61–81 (LISLMIWTLTIIVTFKYVLFL), 107–127 (MPVLFFAGLIGSALFIGDAMI), 145–165 (PAFSDYVLPLSALIMVGLFAV), 174–194 (AVFFGPITVVWFLAMAWGGLI), 211–231 (ALWFITHAGWAGLIVLGAVFL), 255–275 (WFILVFPALALNYLGQGALVL), 293–313 (ALFPMIILATMATVIASQAVI), 345–365 (IYVPAVNMVLFIGVLVLIFSF), 371–391 (LATAYGISVTGAMVVTTLMAF), 402–422 (AFTAAILLAPLFSIEAVFLAA), and 429–449 (DGGWVPLALAGVIILVMWTWT).

Belongs to the HAK/KUP transporter (TC 2.A.72) family.

The protein resides in the cell inner membrane. The catalysed reaction is K(+)(in) + H(+)(in) = K(+)(out) + H(+)(out). Transport of potassium into the cell. Likely operates as a K(+):H(+) symporter. The protein is Probable potassium transport system protein Kup 2 of Agrobacterium fabrum (strain C58 / ATCC 33970) (Agrobacterium tumefaciens (strain C58)).